Here is a 355-residue protein sequence, read N- to C-terminus: Protein RecA (355 aa).

An ATP-binding site is contributed by 67 to 74 (GPESSGKT).

Belongs to the RecA family.

Its subcellular location is the cytoplasm. Functionally, can catalyze the hydrolysis of ATP in the presence of single-stranded DNA, the ATP-dependent uptake of single-stranded DNA by duplex DNA, and the ATP-dependent hybridization of homologous single-stranded DNAs. It interacts with LexA causing its activation and leading to its autocatalytic cleavage. The chain is Protein RecA from Shewanella halifaxensis (strain HAW-EB4).